Here is a 152-residue protein sequence, read N- to C-terminus: Large ribosomal subunit protein uL15 (152 aa).

The segment at 1–57 (MTSTLNTLKSNSGSRKKKLRKGRGIAAGQGASCGFGMRGQKSRSGRPTRPGFEGGQM) is disordered. Residues 14 to 23 (SRKKKLRKGR) are compositionally biased toward basic residues. A compositionally biased stretch (gly residues) spans 25–37 (IAAGQGASCGFGM).

It belongs to the universal ribosomal protein uL15 family. In terms of assembly, part of the 50S ribosomal subunit.

Its function is as follows. Binds to the 23S rRNA. In Prochlorococcus marinus (strain MIT 9215), this protein is Large ribosomal subunit protein uL15.